The chain runs to 342 residues: Tetraacyldisaccharide 4'-kinase (342 aa).

Thr-68–Thr-75 is an ATP binding site.

This sequence belongs to the LpxK family.

It carries out the reaction a lipid A disaccharide + ATP = a lipid IVA + ADP + H(+). It participates in glycolipid biosynthesis; lipid IV(A) biosynthesis; lipid IV(A) from (3R)-3-hydroxytetradecanoyl-[acyl-carrier-protein] and UDP-N-acetyl-alpha-D-glucosamine: step 6/6. In terms of biological role, transfers the gamma-phosphate of ATP to the 4'-position of a tetraacyldisaccharide 1-phosphate intermediate (termed DS-1-P) to form tetraacyldisaccharide 1,4'-bis-phosphate (lipid IVA). This Burkholderia multivorans (strain ATCC 17616 / 249) protein is Tetraacyldisaccharide 4'-kinase.